The following is a 200-amino-acid chain: dITP/XTP pyrophosphatase (200 aa).

Substrate is bound at residue 7–12 (TSNKHK). Glu-38 and Asp-73 together coordinate Mg(2+). Asp-73 serves as the catalytic Proton acceptor. Substrate contacts are provided by residues Ser-74, 154–157 (FGYD), Lys-177, and 182–183 (HR).

This sequence belongs to the HAM1 NTPase family. In terms of assembly, homodimer. The cofactor is Mg(2+).

It carries out the reaction XTP + H2O = XMP + diphosphate + H(+). The enzyme catalyses dITP + H2O = dIMP + diphosphate + H(+). The catalysed reaction is ITP + H2O = IMP + diphosphate + H(+). Pyrophosphatase that catalyzes the hydrolysis of nucleoside triphosphates to their monophosphate derivatives, with a high preference for the non-canonical purine nucleotides XTP (xanthosine triphosphate), dITP (deoxyinosine triphosphate) and ITP. Seems to function as a house-cleaning enzyme that removes non-canonical purine nucleotides from the nucleotide pool, thus preventing their incorporation into DNA/RNA and avoiding chromosomal lesions. The protein is dITP/XTP pyrophosphatase of Campylobacter jejuni subsp. jejuni serotype O:2 (strain ATCC 700819 / NCTC 11168).